The primary structure comprises 438 residues: GTPase Obg (438 aa).

The region spanning 6 to 164 (AEFVDRVKIF…RWLELELKIL (159 aa)) is the Obg domain. The 171-residue stretch at 165-335 (ADVGLVGYPN…LLDRVASIVR (171 aa)) folds into the OBG-type G domain. Residues 171 to 178 (GYPNVGKS), 196 to 200 (FTTLV), 217 to 220 (DIPG), 287 to 290 (NKID), and 316 to 318 (SAV) contribute to the GTP site. Positions 178 and 198 each coordinate Mg(2+). Residues 358 to 438 (VWRKLPERFE…IGNFEFEYRE (81 aa)) enclose the OCT domain.

The protein belongs to the TRAFAC class OBG-HflX-like GTPase superfamily. OBG GTPase family. As to quaternary structure, monomer. Mg(2+) is required as a cofactor.

The protein resides in the cytoplasm. Its function is as follows. An essential GTPase which binds GTP, GDP and possibly (p)ppGpp with moderate affinity, with high nucleotide exchange rates and a fairly low GTP hydrolysis rate. Plays a role in control of the cell cycle, stress response, ribosome biogenesis and in those bacteria that undergo differentiation, in morphogenesis control. This chain is GTPase Obg, found in Thermotoga neapolitana (strain ATCC 49049 / DSM 4359 / NBRC 107923 / NS-E).